The chain runs to 106 residues: COX assembly mitochondrial protein homolog (106 aa).

N-acetylalanine is present on Ala2. In terms of domain architecture, CHCH spans 28-71 (KERCSEQVQDFTKCCKNSGVLMVVKCRKENSALKECLTAYYNDP). 2 consecutive short sequence motifs (cx9C motif) follow at residues 31-41 (CSEQVQDFTKC) and 53-63 (CRKENSALKEC). Cystine bridges form between Cys31/Cys63 and Cys41/Cys53.

Belongs to the CMC family. Component of the MITRAC (mitochondrial translation regulation assembly intermediate of cytochrome c oxidase complex) complex, the core components of this complex being COA3/MITRAC12 and COX14.

The protein localises to the mitochondrion. Component of the MITRAC (mitochondrial translation regulation assembly intermediate of cytochrome c oxidase complex) complex, that regulates cytochrome c oxidase assembly. In Homo sapiens (Human), this protein is COX assembly mitochondrial protein homolog (CMC1).